Consider the following 663-residue polypeptide: Putative glucosamine-6-phosphate deaminase-like protein BT_0258 (663 aa).

Positions 1–290 (MKTNLSSQIT…NLTRIQRPWL (290 aa)) are glucosamine-6-phosphate deaminase-like. Glutamate 184 is a catalytic residue.

This sequence in the N-terminal section; belongs to the glucosamine/galactosamine-6-phosphate isomerase family. NagB subfamily.

In Bacteroides thetaiotaomicron (strain ATCC 29148 / DSM 2079 / JCM 5827 / CCUG 10774 / NCTC 10582 / VPI-5482 / E50), this protein is Putative glucosamine-6-phosphate deaminase-like protein BT_0258.